The primary structure comprises 103 residues: Defensin-like protein 290 (103 aa).

A signal peptide spans 1-29 (MTALRRTISIIFVFYLSCTLFVNIFGVQA). Disulfide bonds link cysteine 33–cysteine 50, cysteine 39–cysteine 55, cysteine 43–cysteine 57, cysteine 72–cysteine 92, cysteine 78–cysteine 98, and cysteine 84–cysteine 100.

The protein belongs to the DEFL family.

Its subcellular location is the secreted. The chain is Defensin-like protein 290 from Arabidopsis thaliana (Mouse-ear cress).